A 352-amino-acid chain; its full sequence is 7,8-didemethyl-8-hydroxy-5-deazariboflavin synthase (352 aa).

The Radical SAM core domain occupies 35-275 (ITFSKNAFIP…EGISIQVPPN (241 aa)). 3 residues coordinate [4Fe-4S] cluster: Cys-49, Cys-53, and Cys-56.

The protein belongs to the radical SAM superfamily. CofG family. Consists of two subunits, CofG and CofH. It depends on [4Fe-4S] cluster as a cofactor.

The enzyme catalyses 5-amino-5-(4-hydroxybenzyl)-6-(D-ribitylimino)-5,6-dihydrouracil + S-adenosyl-L-methionine = 7,8-didemethyl-8-hydroxy-5-deazariboflavin + 5'-deoxyadenosine + L-methionine + NH4(+) + H(+). It participates in cofactor biosynthesis; coenzyme F0 biosynthesis. Catalyzes the radical-mediated synthesis of 7,8-didemethyl-8-hydroxy-5-deazariboflavin from 5-amino-5-(4-hydroxybenzyl)-6-(D-ribitylimino)-5,6-dihydrouracil. The sequence is that of 7,8-didemethyl-8-hydroxy-5-deazariboflavin synthase from Methanococcus maripaludis (strain C5 / ATCC BAA-1333).